Consider the following 23-residue polypeptide: Cysteine-rich venom protein 24 (23 aa).

Residues 1 to 23 (VDFASESXNKRENQQIVDKHNAL) are disordered. Residues 8–23 (XNKRENQQIVDKHNAL) are compositionally biased toward basic and acidic residues.

It belongs to the CRISP family. Post-translationally, contains 8 disulfide bonds. As to expression, expressed by the venom gland.

Its subcellular location is the secreted. This Naja kaouthia (Monocled cobra) protein is Cysteine-rich venom protein 24.